Consider the following 437-residue polypeptide: Epsilon-sarcoglycan (437 aa).

Residues 1–317 (MQLPRWWELG…LKSRDYYTDF (317 aa)) lie on the Extracellular side of the membrane. An N-linked (GlcNAc...) asparagine glycan is attached at N200. The chain crosses the membrane as a helical span at residues 318–338 (LITLAVPSAVALVLFLILAYI). Residues 339 to 437 (MCCRREGVEK…QQQTTGKWYP (99 aa)) are Cytoplasmic-facing.

The protein belongs to the sarcoglycan alpha/epsilon family. Post-translationally, N-glycosylated. In terms of processing, ubiquitinated, leading to its degradation by the proteasome.

It is found in the cell membrane. It localises to the sarcolemma. The protein resides in the cytoplasm. The protein localises to the cytoskeleton. Its subcellular location is the cell projection. It is found in the dendrite. It localises to the golgi apparatus. In terms of biological role, component of the sarcoglycan complex, a subcomplex of the dystrophin-glycoprotein complex which forms a link between the F-actin cytoskeleton and the extracellular matrix. The protein is Epsilon-sarcoglycan of Pongo abelii (Sumatran orangutan).